A 512-amino-acid polypeptide reads, in one-letter code: MGMSWWLACAAAFSALCVLKASSLDTFLAAVYEHAVILPKDTLLPVSHSEALALMNQNLDLLEGAIVSAAKQGAHIIVTPEDGIYGVRFTRDTIYPYLEEIPDPQVNWIPCDNPKRFGSTPVQERLSCLAKNNSIYVVANMGDKKPCNTSDSHCPPDGRFQYNTDVVFDSQGKLVARYHKQNIFMGEDQFNVPMEPEFVTFDTPFGKFGVFTCFDILFHDPAVTLVTEFQVDTILFPTAWMDVLPHLAAIEFHSAWAMGMGVNFLAANLHNPSRRMTGSGIYAPDSPRVFHYDRKTQEGKLLFAQLKSHPIHSPVNWTSYASSVESTPTKTQEFQSIVFFDEFTFVELKGIKGNYTVCQNDLCCHLSYQMSEKRADEVYAFGAFDGLHTVEGQYYLQICILLKCKTTNLRTCGSSVDTAFTRFEMFSLSGTFGTRYVFPEVLLSEVKLAPGEFQVSSDGRLVSLKPTSGPVLTIGLFGRLYGKDWASNASSDFIAHSLIIMLIVTPIIHYLC.

The N-terminal stretch at 1–23 is a signal peptide; the sequence is MGMSWWLACAAAFSALCVLKASS. The 277-residue stretch at 32 to 308 folds into the CN hydrolase domain; that stretch reads YEHAVILPKD…GKLLFAQLKS (277 aa). The Proton acceptor role is filled by E81. N-linked (GlcNAc...) asparagine glycosylation is found at N132 and N148. Catalysis depends on K180, which acts as the Proton donor. C213 serves as the catalytic Nucleophile. 2 N-linked (GlcNAc...) asparagine glycosylation sites follow: N316 and N354. N488 carries GPI-anchor amidated asparagine lipidation. The propeptide at 489–512 is removed in mature form; it reads ASSDFIAHSLIIMLIVTPIIHYLC.

The protein belongs to the carbon-nitrogen hydrolase superfamily. BTD/VNN family. Monomer. Post-translationally, N-glycosylated. As to expression, detected in kidney (at protein level). Ubiquitous.

The protein localises to the cell membrane. The enzyme catalyses (R)-pantetheine + H2O = cysteamine + (R)-pantothenate. In terms of biological role, amidohydrolase that hydrolyzes specifically one of the carboamide linkages in D-pantetheine thus recycling pantothenic acid (vitamin B5) and releasing cysteamine. In Mus musculus (Mouse), this protein is Pantetheinase (Vnn1).